We begin with the raw amino-acid sequence, 150 residues long: D-aminoacyl-tRNA deacylase (150 aa).

A Gly-cisPro motif, important for rejection of L-amino acids motif is present at residues 140–141 (GP).

Belongs to the DTD family. In terms of assembly, homodimer.

It localises to the cytoplasm. It catalyses the reaction glycyl-tRNA(Ala) + H2O = tRNA(Ala) + glycine + H(+). It carries out the reaction a D-aminoacyl-tRNA + H2O = a tRNA + a D-alpha-amino acid + H(+). Its function is as follows. An aminoacyl-tRNA editing enzyme that deacylates mischarged D-aminoacyl-tRNAs. Also deacylates mischarged glycyl-tRNA(Ala), protecting cells against glycine mischarging by AlaRS. Acts via tRNA-based rather than protein-based catalysis; rejects L-amino acids rather than detecting D-amino acids in the active site. By recycling D-aminoacyl-tRNA to D-amino acids and free tRNA molecules, this enzyme counteracts the toxicity associated with the formation of D-aminoacyl-tRNA entities in vivo and helps enforce protein L-homochirality. This chain is D-aminoacyl-tRNA deacylase (DTD1), found in Eremothecium gossypii (strain ATCC 10895 / CBS 109.51 / FGSC 9923 / NRRL Y-1056) (Yeast).